The sequence spans 229 residues: Transmembrane protein 217 (229 aa).

A helical membrane pass occupies residues 13 to 33 (MGTVLSGVFTIMAVDMYLIFE). N-linked (GlcNAc...) asparagine glycosylation is present at N39. Transmembrane regions (helical) follow at residues 67–87 (IVLF…YSVY), 94–114 (LVIY…IQIL), and 129–149 (WFGL…VINY). A glycan (N-linked (GlcNAc...) asparagine) is linked at N156.

It is found in the membrane. This chain is Transmembrane protein 217 (TMEM217), found in Homo sapiens (Human).